Here is a 340-residue protein sequence, read N- to C-terminus: Peroxisomal adenine nucleotide transporter 1 (340 aa).

3 Solcar repeats span residues 4 to 119 (ENAV…VRKH), 133 to 218 (FSTP…LREA), and 236 to 320 (LSPG…LTKM). 6 consecutive transmembrane segments (helical) span residues 6–26 (AVIG…LDLA), 96–116 (GSST…YTLV), 139–159 (LVLG…INVV), 190–210 (GFWA…ITYA), 242–262 (FVMG…LIIA), and 293–313 (WKGL…LFMF).

Belongs to the mitochondrial carrier (TC 2.A.29) family.

It is found in the peroxisome membrane. In terms of biological role, adenine nucleotide transporter involved in the uniport of ATP and adenine nucleotide hetero-exchange transport between the cytosol and the peroxisomal lumen. This transport is accompanied by a proton transport from the peroxisomal lumen to the cytosol. Transport of ATP into the peroxisome is required for beta-oxidation of medium-chain fatty acids. The protein is Peroxisomal adenine nucleotide transporter 1 (ANT1) of Eremothecium gossypii (strain ATCC 10895 / CBS 109.51 / FGSC 9923 / NRRL Y-1056) (Yeast).